The sequence spans 200 residues: Protein C2-DOMAIN ABA-RELATED 5 (200 aa).

The C2 domain maps to 22–142 (VAGEKHKDRR…LKMHLHDLPS (121 aa)). Residues Arg57, Asp58, Asp63, Asp109, Tyr110, Asp111, and Asp117 each contribute to the Ca(2+) site.

The protein belongs to the plant CAR protein family. In terms of assembly, binds to PYR/PYL/RCAR abscisic acid intracellular receptors in an ABA-independent manner, both at the plasma membrane and in the nucleus.

It is found in the cell membrane. Its subcellular location is the nucleus. Stimulates the GTPase/ATPase activities of Obg-like ATPases. Mediates the transient calcium-dependent interaction of PYR/PYL/RCAR abscisic acid (ABA) receptors with the plasma membrane and thus regulates ABA sensitivity. This is Protein C2-DOMAIN ABA-RELATED 5 from Arabidopsis thaliana (Mouse-ear cress).